The primary structure comprises 57 residues: UPF0509 protein YciZ (57 aa).

Belongs to the UPF0509 family.

In Shigella flexneri, this protein is UPF0509 protein YciZ (yciZ).